The primary structure comprises 177 residues: Prorelaxin (177 aa).

The first 25 residues, 1–25 (MLRWFLSHLLGVWLLLSQLPREIPA), serve as a signal peptide directing secretion. Cystine bridges form between Cys34–Cys164, Cys46–Cys177, and Cys163–Cys168. Positions 63 to 149 (QISEPLAEVV…KSLSKLDKHP (87 aa)) are cleaved as a propeptide — connecting peptide.

Belongs to the insulin family. As to quaternary structure, heterodimer of a B chain and an A chain linked by two disulfide bonds. As to expression, placenta; syncytiotrophoblast.

It is found in the secreted. Functionally, relaxin is an ovarian hormone that acts with estrogen to produce dilatation of the birth canal in many mammals. The protein is Prorelaxin (RLN) of Canis lupus familiaris (Dog).